Here is a 210-residue protein sequence, read N- to C-terminus: Na(+)-translocating NADH-quinone reductase subunit D (210 aa).

6 consecutive transmembrane segments (helical) span residues 9–29 (SVLI…LGVC), 42–62 (LVMT…ISLI), 72–92 (IIVQ…VLQA), 103–123 (VFVG…AFAM), 131–151 (FMDG…VGFV), and 178–198 (NGLL…IWII).

This sequence belongs to the NqrDE/RnfAE family. In terms of assembly, composed of six subunits; NqrA, NqrB, NqrC, NqrD, NqrE and NqrF.

The protein resides in the cell inner membrane. It catalyses the reaction a ubiquinone + n Na(+)(in) + NADH + H(+) = a ubiquinol + n Na(+)(out) + NAD(+). Functionally, NQR complex catalyzes the reduction of ubiquinone-1 to ubiquinol by two successive reactions, coupled with the transport of Na(+) ions from the cytoplasm to the periplasm. NqrA to NqrE are probably involved in the second step, the conversion of ubisemiquinone to ubiquinol. The chain is Na(+)-translocating NADH-quinone reductase subunit D from Shewanella piezotolerans (strain WP3 / JCM 13877).